The following is a 291-amino-acid chain: U3 small nucleolar ribonucleoprotein protein IMP4 (291 aa).

Residues 83–264 (PKVMITTSRD…LYMIRLGTLE (182 aa)) form the Brix domain.

As to quaternary structure, part of the small subunit (SSU) processome, composed of more than 70 proteins and the RNA chaperone small nucleolar RNA (snoRNA) U3. Component of a heterotrimeric complex containing IMP3, IMP4 and MPHOSPH10. Interacts with MPHOSPH10.

The protein resides in the nucleus. It is found in the nucleolus. Its function is as follows. Component of the 60-80S U3 small nucleolar ribonucleoprotein (U3 snoRNP). Required for the early cleavages during pre-18S ribosomal RNA processing. Part of the small subunit (SSU) processome, first precursor of the small eukaryotic ribosomal subunit. During the assembly of the SSU processome in the nucleolus, many ribosome biogenesis factors, an RNA chaperone and ribosomal proteins associate with the nascent pre-rRNA and work in concert to generate RNA folding, modifications, rearrangements and cleavage as well as targeted degradation of pre-ribosomal RNA by the RNA exosome. The polypeptide is U3 small nucleolar ribonucleoprotein protein IMP4 (Homo sapiens (Human)).